The sequence spans 237 residues: Ribosomally synthesized cyclic peptide ustiloxin B precursosr (237 aa).

The N-terminal stretch at 1–19 (MKLILTLLVSGLCALAAPA) is a signal peptide. 2 propeptides span residues 20–22 (AKR) and 234–237 (HGGH).

In terms of processing, ustA is processed by the subtilisin-like endoprotease kex2 that is outside the ustiloxin B gene cluster, at the C-terminal side of Arg-Lys, after transfer to Golgi apparatus through the endoplasmic reticulum (ER). Cleavage by kex2 generates 16 peptides YAIG-I to YAIG-XVI. To process the precursor peptide further, at least two peptidases are necessary to cleave the N-terminal and C-terminal sides of the Tyr-Ala-Ile-Gly core peptide which serves as backbone for the synthesis of ustiloxin B, through cyclization and modification of the tyrosine. One of the two peptidases must be the serine peptidase ustP; and the other pepdidase is probably ustH. Macrocyclization of the core peptide derived from ustA requires the tyrosinase ustQ, as well as the homologous oxidases ustYa and ustYb, and leads to the production of the first cyclization product N-desmethylustiloxin F. For the formation of N-desmethylustiloxin F, three oxidation steps are required, hydroxylation at the benzylic position, hydroxylation at either the aromatic ring of Tyr or beta-position of Ile, and oxidative cyclization. UstQ may catalyze the oxidation of a phenol moiety, whereas the ustYa and ustYb are most likely responsible for the remaining two-step oxidations. N-desmethylustiloxin F is then methylated by ustM to yield ustiloxin F which in turn substrate of the cytochrome P450 monooxygenase ustC which catalyzes the formation of S-deoxyustiloxin H. The flavoprotein monooxygenases ustF1 and ustF2 then participate in the modification of the side chain of S-deoxyustiloxin H, leading to the synthesis of an oxime intermediate, via ustiloxin H. Finally, carboxylative dehydration performed by the cysteine desulfurase-like protein ustD yields ustiloxin B.

Its pathway is mycotoxin biosynthesis. Functionally, ribosomally synthesized cyclic peptide ustiloxin B precursor: Part of the gene cluster that mediates the biosynthesis of the secondary metabolite ustiloxin B, an antimitotic tetrapeptide. The ustA translated product contains a 16-fold repeated peptide embedding the tetrapeptide Tyr-Ala-Ile-Gly, that is converted into the cyclic moiety of ustiloxin B. This Aspergillus flavus (strain ATCC 200026 / FGSC A1120 / IAM 13836 / NRRL 3357 / JCM 12722 / SRRC 167) protein is Ribosomally synthesized cyclic peptide ustiloxin B precursosr.